We begin with the raw amino-acid sequence, 98 residues long: UPF0235 protein CCNA_03737 (98 aa).

The protein belongs to the UPF0235 family.

The sequence is that of UPF0235 protein CCNA_03737 from Caulobacter vibrioides (strain NA1000 / CB15N) (Caulobacter crescentus).